A 277-amino-acid chain; its full sequence is Putative thiosulfate sulfurtransferase (277 aa).

Rhodanese domains are found at residues 18–125 (KAPK…PLSA) and 154–274 (AIGT…APIE). Residue lysine 67 forms an Isoglutamyl lysine isopeptide (Lys-Gln) (interchain with Q-Cter in protein Pup) linkage. Cysteine 233 acts as the Cysteine persulfide intermediate in catalysis. Arginine 238 is a substrate binding site.

It carries out the reaction thiosulfate + hydrogen cyanide = thiocyanate + sulfite + 2 H(+). May be a sulfotransferase involved in the formation of thiosulfate. The polypeptide is Putative thiosulfate sulfurtransferase (Mycolicibacterium smegmatis (strain ATCC 700084 / mc(2)155) (Mycobacterium smegmatis)).